Reading from the N-terminus, the 461-residue chain is MTLRHQIIALAIVPLVISILAITTFITWQSANLAKNSIDTFEQNMLKTKEAEILNLTNLALSAIQTIYDKAGSDDEAAKQQVAAILTSLDYGKDGYFFVYDYDGNNIVHPRQSFRHGHNWLDLTDPDGDKVIAELIATAKAGGGLHQYKWQKPSTGQIADKLSFVVSLDKWHWVVGTGVYLDDVFAQSAAANAGMRANIKRTFVIVALIDVPSVLVVFTTCMLLTFHERRMADSRLKALTQRVIDTQEEERARLARELHDGISQNLVGVRYAMDLAGRKVRTNVDDAALTIDRGVEALNGAIKEIRRLSHDLRPRVLDDLGLTAALEALCYHFAERTGIETKIDASGFTDTLKAEANTALYRVAQEAFNNVERHAGASKLAVKLWSDNGRARMTVSDNGAGFDGIKDGMSGRSGLGLRNMQERMAHFRGLLLINSSEAGTTLTAMMPKSANRPVNRQAEAA.

Helical transmembrane passes span 7–27 (IIAL…TFIT) and 203–223 (FVIV…TCML). Position 259 is a phosphohistidine; by autocatalysis (histidine 259). Residues 360–450 (LYRVAQEAFN…TLTAMMPKSA (91 aa)) enclose the Histidine kinase domain.

Its subcellular location is the cell membrane. It carries out the reaction ATP + protein L-histidine = ADP + protein N-phospho-L-histidine.. Functionally, member of the two-component regulatory system MctS/MctR, which activates mctP expression. The chain is Sensor histidine kinase MctS from Rhizobium johnstonii (strain DSM 114642 / LMG 32736 / 3841) (Rhizobium leguminosarum bv. viciae).